The chain runs to 91 residues: Large ribosomal subunit protein bL31B (91 aa).

The protein belongs to the bacterial ribosomal protein bL31 family. Type B subfamily. In terms of assembly, part of the 50S ribosomal subunit.

In Neisseria gonorrhoeae (strain NCCP11945), this protein is Large ribosomal subunit protein bL31B.